Reading from the N-terminus, the 261-residue chain is Membrane protein insertase MisCA (261 aa).

Positions 1–22 (MLLKRRIGLLLSMVGVFMLLAG) are cleaved as a signal peptide. Cys23 is lipidated: N-palmitoyl cysteine. Cys23 carries S-diacylglycerol cysteine lipidation. A run of 5 helical transmembrane segments spans residues 61 to 81 (YGLS…PLMI), 131 to 151 (LAGC…YHAI), 174 to 194 (YILP…MMAG), 204 to 224 (MMLW…PAAL), and 225 to 245 (SLYW…IKGP).

This sequence belongs to the OXA1/ALB3/YidC family. Type 2 subfamily. Mostly monomeric, it may also form dimers. Interacts with SpoIIIAE. Forms a complex with the F(1)F(0) ATP synthase in which can be found the alpha, beta, gamma, delta and epsilon subunits of F(1) and a, b and subunits of F(0). YqgA is found in the same complex.

It localises to the cell membrane. Its function is as follows. Required for the insertion and/or proper folding and/or complex formation of integral membrane proteins into the membrane. Involved in integration of membrane proteins that insert both dependently and independently of the Sec translocase complex, as well as at least some lipoproteins. Also involved in protein secretion processes. Essential for sporulation by activating sigma factor SpoIIIG/SigG after engulfment is completed in the prespore, maybe by acting on SpoIIIAE. It has an overlapping, although partly distinct, function compared to YqjG(MisCB). This chain is Membrane protein insertase MisCA (misCA), found in Bacillus subtilis (strain 168).